An 86-amino-acid polypeptide reads, in one-letter code: Small ribosomal subunit protein bS16 (86 aa).

It belongs to the bacterial ribosomal protein bS16 family.

The sequence is that of Small ribosomal subunit protein bS16 from Thermoanaerobacter sp. (strain X514).